A 417-amino-acid chain; its full sequence is Cyanophycinase (417 aa).

An N-terminal signal peptide occupies residues methionine 1–alanine 23. Active-site charge relay system residues include serine 169, aspartate 188, and histidine 222.

It belongs to the peptidase S51 family.

It is found in the secreted. It catalyses the reaction [L-4-(L-arginin-2-N-yl)aspartate](n) + H2O = [L-4-(L-arginin-2-N-yl)aspartate](n-1) + L-4-(L-arginin-2-N-yl)aspartate. Inhibited by serine protease inhibitors. Inhibited by N-Bromo-succinimide. In terms of biological role, exopeptidase that catalyzes the hydrolytic cleavage of multi-L-arginyl-poly-L-aspartic acid (cyanophycin; a water-insoluble reserve polymer) into aspartate-arginine dipeptides. The polypeptide is Cyanophycinase (cphE) (Pseudomonas anguilliseptica).